Reading from the N-terminus, the 102-residue chain is NADH-quinone oxidoreductase subunit K (102 aa).

3 consecutive transmembrane segments (helical) span residues Ala5–Leu25, Ile30–Ala50, and Met63–Leu83.

It belongs to the complex I subunit 4L family. NDH-1 is composed of 14 different subunits. Subunits NuoA, H, J, K, L, M, N constitute the membrane sector of the complex.

It localises to the cell inner membrane. It carries out the reaction a quinone + NADH + 5 H(+)(in) = a quinol + NAD(+) + 4 H(+)(out). Functionally, NDH-1 shuttles electrons from NADH, via FMN and iron-sulfur (Fe-S) centers, to quinones in the respiratory chain. The immediate electron acceptor for the enzyme in this species is believed to be ubiquinone. Couples the redox reaction to proton translocation (for every two electrons transferred, four hydrogen ions are translocated across the cytoplasmic membrane), and thus conserves the redox energy in a proton gradient. This Rhodopseudomonas palustris (strain BisB18) protein is NADH-quinone oxidoreductase subunit K.